The primary structure comprises 293 residues: Short-chain dehydrogenase/reductase PhomF' (293 aa).

NADP(+) is bound by residues isoleucine 31 and asparagine 102. Catalysis depends on serine 175, which acts as the Proton donor. NADP(+) contacts are provided by tyrosine 190, lysine 194, and serine 225. Tyrosine 190 (proton acceptor) is an active-site residue. The active-site Lowers pKa of active site Tyr is the lysine 194.

This sequence belongs to the short-chain dehydrogenases/reductases (SDR) family.

Its function is as follows. Short-chain dehydrogenase/reductase; part of the gene cluster that mediates the biosynthesis of the phomopsins, a group of hexapeptide mycotoxins which infects lupins and causes lupinosis disease in livestock. The role of phomF' within the phomopsins biosynthesis pathway has still to be determined. The pathway starts with the processing of the precursor phomA by several endopeptidases including kexin proteases as well as the cluster-specific S41 family peptidase phomP1 and the oligopeptidase phomG to produce 10 identical copies of the hexapeptide Tyr-Val-Ile-Pro-Ile-Asp. After being excised from the precursor peptide, the core peptides are cyclized and modified post-translationally by enzymes encoded within the gene cluster. The timing and order of proteolysis of the phomA precursor and PTMs are still unknown. Two tyrosinase-like enzymes, phomQ1 and phomQ2, catalyze the chlorination and hydroxylation of Tyr, respectively. PhomYb, is proposed to be involved in the construction of the macrocyclic structure. The other 4 ustYa family proteins may be involved in PTMs that generate the unique structure of phomopsin A. PhomYa is required for the hydroxylation of C-beta of Tyr. PhomYc, phomYd, and phomYe are responsible for the biosynthesis of 2,3-dehydroisoleucine (dIle), 2,3-dehydroaspartic acid (dAsp), and 3,4-dehydroproline (dPro), respectively. While dIle formation by phomYc is indispensable for the installation of dAsp by phomYd, the order of the other PTMs have not been elucidated yet. Most of the biosynthetic enzymes likely have broad substrate specificity, and thus, there might be a metabolic grid from a precursor to phomopsin A. The enzyme(s) responsible for the biosynthesis of 3,4-dehydrovaline (dVal) have also not been identified yet. Finally, phomM acts as an S-adenosylmethionine-dependent alpha-N-methyltransferase that catalyzes two successive N-methylation reactions, converting N-desmethyl-phomopsin A to phomopsin A and phomopsin A further to an N,N-dimethylated congener called phomopsin E. This is Short-chain dehydrogenase/reductase PhomF' from Diaporthe leptostromiformis (Lupinosis disease fungus).